A 107-amino-acid chain; its full sequence is UPF0145 protein Memar_1285 (107 aa).

Belongs to the UPF0145 family.

The polypeptide is UPF0145 protein Memar_1285 (Methanoculleus marisnigri (strain ATCC 35101 / DSM 1498 / JR1)).